The following is a 2115-amino-acid chain: Non-reducing polyketide synthase ascC (2115 aa).

The interval Met-1 to Ala-21 is disordered. Residues Val-14–Gln-260 are N-terminal acylcarrier protein transacylase domain (SAT). The 425-residue stretch at Pro-381–Glu-805 folds into the Ketosynthase family 3 (KS3) domain. Active-site for beta-ketoacyl synthase activity residues include Cys-553, His-689, and His-728. Positions Leu-908 to Ala-1210 are malonyl-CoA:ACP transacylase (MAT) domain. Residue Ser-995 is the For acyl/malonyl transferase activity of the active site. The interval Pro-1280 to Met-1406 is N-terminal hotdog fold. In terms of domain architecture, PKS/mFAS DH spans Pro-1280–Glu-1581. The tract at residues Gln-1285 to Leu-1580 is product template (PT) domain. Catalysis depends on His-1315, which acts as the Proton acceptor; for dehydratase activity. The interval Asp-1428–Glu-1581 is C-terminal hotdog fold. Asp-1492 (proton donor; for dehydratase activity) is an active-site residue. A disordered region spans residues Ala-1587–Met-1624. The span at Asn-1588–Ala-1600 shows a compositional bias: polar residues. The Carrier domain occupies Pro-1640–Val-1724. The residue at position 1674 (Ser-1674) is an O-(pantetheine 4'-phosphoryl)serine. Polar residues predominate over residues Ser-1734–Pro-1748. The disordered stretch occupies residues Ser-1734 to Val-1767. The interval Ala-1777 to Asn-2107 is thioesterase (TE) domain. Active-site for thioesterase activity residues include Ser-1897 and Asp-2045.

The catalysed reaction is 3 malonyl-CoA + acetyl-CoA + 2 H(+) = orsellinate + 3 CO2 + 4 CoA. It participates in secondary metabolite biosynthesis; terpenoid biosynthesis. In terms of biological role, non-reducing polyketide synthase; part of the asc-1 gene cluster that mediates the biosynthesis of both ascochlorin and ascofuranone, a strong inhibitor of cyanide-insensitive alternative oxidases and a promising drug candidate against African trypanosomiasis. The first step in the pathway is performed by the non-reducing polyketide synthase ascC that produces orsellinic acid by condensing acetyl-CoA with 3 malonyl-CoA units. Orsellinic acid is then prenylated by the prenyltransferase ascA to yield ilicicolinic acid B. Ilicicolinic acid B is further reduced to ilicicolin B by the reductase ascB. The halogenase ascD then chlorinates ilicicolin B to produce ilicicolin A which is converted to ilicicolin A epoxide by the cytochrome P450 monooxygenase ascE that catalyzes stereoselective epoxidation of the terminal double bond of the prenyl group. Ilicicolin A epoxide is the last common precursor for the biosynthesis of ascofuranone and ascochlorin. The terpene cyclase ascF produces a monocyclic terpene, and the cyclization reaction is proposed to be initiated by protonation of the terminal epoxide of ilicicolin A epoxide to generate a monocyclic tertiarycation, which is followed by a series of hydride and methyl shifts with abstraction of proton, leading to the formation of the (14S,15R,19R)-trimethylcyclohexanone ring structure of ilicicolin C, which is finally reduced to ascochlorin by the dehydrogenase ascG. On the other hand, ilicicolin A epoxide is hydroxylated by the cytochrome P450 monooxygenase ascH, and the resultant product is cyclized by the terpene cyclase ascI to ascofuranol via protonation-initiated epoxide ring opening, which facilitates the 6-endo-tet cyclization to form the tetrahy-drofuran ring. Finally, ascofuranol is oxidized into ascofuranone by ascJ. The sequence is that of Non-reducing polyketide synthase ascC from Acremonium egyptiacum (Oospora egyptiaca).